An 89-amino-acid chain; its full sequence is Sec-independent protein translocase protein TatA (89 aa).

Residues 1 to 21 (MFGLSPAQLIILLVVILLIFG) form a helical membrane-spanning segment.

The protein belongs to the TatA/E family. The Tat system comprises two distinct complexes: a TatABC complex, containing multiple copies of TatA, TatB and TatC subunits, and a separate TatA complex, containing only TatA subunits. Substrates initially bind to the TatABC complex, which probably triggers association of the separate TatA complex to form the active translocon.

It is found in the cell inner membrane. Part of the twin-arginine translocation (Tat) system that transports large folded proteins containing a characteristic twin-arginine motif in their signal peptide across membranes. TatA could form the protein-conducting channel of the Tat system. This chain is Sec-independent protein translocase protein TatA, found in Haemophilus influenzae (strain ATCC 51907 / DSM 11121 / KW20 / Rd).